The chain runs to 108 residues: Protein YcgL (108 aa).

A YcgL domain is found at 12–96 (MFCVIYRSSK…PPEDLLKQHL (85 aa)).

This chain is Protein YcgL, found in Escherichia coli (strain K12 / MC4100 / BW2952).